The following is a 286-amino-acid chain: Protein N-terminal amidase (286 aa).

The 286-residue stretch at M1–K286 folds into the CN hydrolase domain. E43 functions as the Proton acceptor in the catalytic mechanism. K121 functions as the Proton donor in the catalytic mechanism. Catalysis depends on C155, which acts as the Nucleophile.

This sequence belongs to the carbon-nitrogen hydrolase superfamily.

Its subcellular location is the cytoplasm. It localises to the nucleus. Deamidates N-terminal Asn and Gln. Component of a targeting complex in the N-end rule pathway. The protein is Protein N-terminal amidase (nta1) of Schizosaccharomyces pombe (strain 972 / ATCC 24843) (Fission yeast).